A 909-amino-acid polypeptide reads, in one-letter code: MFSSILTKVFGSRNDRTLKKLNKITEQVNQLEAQYEALSDEQLKAKTGEFQKRLQDGEDTDNLLPEAFAVVREASKRVFSMRHFDVQMLGGQVLHTGQIAEMRTGEGKTLTSTLPAYLNALSGKGVHVITVNDYLASRDAEGSRPLFEFLGLSVGCNIPGMNHAQKKEAYAADITYGTNNEFGFDYLRDNMAFSPGDRVQRELHYAIIDEVDSILIDEARTPLIISGQAEDSSELYRKINAIIPQLEQQEKEDEEGKNGDGDYTIDEKGKQVHLTEKGQIHVEEILKTSGILGEDESLFAAANISLLHHVNAALRAHKLFSRDVDYIVKGDDVVIVDEHTGRTMEGRRWSEGLHQAVEAKEGVNIQNENQTLASITFQNYFRLYDKLAGMTGTADTEAFEFQSIYGLDTVVIPTNKPMVRKDKADLIYLTAQEKYEAIVEDIKDCVKRGQPTLVGTVSIENSELISNILKKAKIPHKVLNAKFHEQEADIVAQAGKPGAVTIATNMAGRGTDIVLGGNWQVAVDGINDPKPGTVEKIKEQWQKDHDAVIEAGGLHIIGTERHESRRIDNQLRGRSGRQGDAGSSRFYLSLDDALMRIFASEKMGNMMKRLGMERGEAIEHPWVTRAIENAQRKVEGRNFDMRKQLLEFDDVANDQRKVIYEQRNELLDEGDIYSTIEAIRIDVVDSIISQYIPPQSLSEMWNVSGLEEHFKSEFLLDIPLQKWIDEDDKLYEEKIRERILEEVNNAYKAKEDIVGPDVLRQFEKAVMLQNLDSHWKEHLAAMDHLRQGIHLRGYAQKNPKQEYKRESFELFTEMLEALKVEVVTVLSKVQVKAESDVEAVEEQRRQADEQPKQYEHETASATQAPEQAPEAAPAARPGNALRDGPKVGRNDPCPCGSGLKYKQCHGKLS.

Residues glutamine 87 and 105–109 (GEGKT) contribute to the ATP site. Residues 246–265 (LEQQEKEDEEGKNGDGDYTI) form a disordered region. A compositionally biased stretch (basic and acidic residues) spans 254–265 (EEGKNGDGDYTI). Residue aspartate 512 participates in ATP binding. A compositionally biased stretch (basic and acidic residues) spans 834-858 (ESDVEAVEEQRRQADEQPKQYEHET). Residues 834 to 899 (ESDVEAVEEQ…NDPCPCGSGL (66 aa)) are disordered. The span at 859–875 (ASATQAPEQAPEAAPAA) shows a compositional bias: low complexity. The Zn(2+) site is built by cysteine 893, cysteine 895, cysteine 904, and histidine 905.

The protein belongs to the SecA family. In terms of assembly, monomer and homodimer. Part of the essential Sec protein translocation apparatus which comprises SecA, SecYEG and auxiliary proteins SecDF-YajC and YidC. Requires Zn(2+) as cofactor.

The protein resides in the cell inner membrane. It localises to the cytoplasm. The catalysed reaction is ATP + H2O + cellular proteinSide 1 = ADP + phosphate + cellular proteinSide 2.. Part of the Sec protein translocase complex. Interacts with the SecYEG preprotein conducting channel. Has a central role in coupling the hydrolysis of ATP to the transfer of proteins into and across the cell membrane, serving both as a receptor for the preprotein-SecB complex and as an ATP-driven molecular motor driving the stepwise translocation of polypeptide chains across the membrane. The protein is Protein translocase subunit SecA of Pseudoalteromonas atlantica (strain T6c / ATCC BAA-1087).